The primary structure comprises 283 residues: Release factor glutamine methyltransferase (283 aa).

Positions 143 and 189 each coordinate S-adenosyl-L-methionine. Asn-189–Tyr-192 lines the substrate pocket.

The protein belongs to the protein N5-glutamine methyltransferase family. PrmC subfamily.

The enzyme catalyses L-glutaminyl-[peptide chain release factor] + S-adenosyl-L-methionine = N(5)-methyl-L-glutaminyl-[peptide chain release factor] + S-adenosyl-L-homocysteine + H(+). In terms of biological role, methylates the class 1 translation termination release factors RF1/PrfA and RF2/PrfB on the glutamine residue of the universally conserved GGQ motif. This is Release factor glutamine methyltransferase from Clostridium botulinum (strain Hall / ATCC 3502 / NCTC 13319 / Type A).